A 211-amino-acid chain; its full sequence is tRNA (guanine-N(7)-)-methyltransferase (211 aa).

S-adenosyl-L-methionine is bound by residues Glu43, Asp68, Asn95, and Asn117. Substrate-binding positions include Lys121, Asp153, and 190–193 (TEYE).

It belongs to the class I-like SAM-binding methyltransferase superfamily. TrmB family.

It catalyses the reaction guanosine(46) in tRNA + S-adenosyl-L-methionine = N(7)-methylguanosine(46) in tRNA + S-adenosyl-L-homocysteine. It functions in the pathway tRNA modification; N(7)-methylguanine-tRNA biosynthesis. Its function is as follows. Catalyzes the formation of N(7)-methylguanine at position 46 (m7G46) in tRNA. This is tRNA (guanine-N(7)-)-methyltransferase from Clostridium kluyveri (strain ATCC 8527 / DSM 555 / NBRC 12016 / NCIMB 10680 / K1).